The chain runs to 238 residues: Chorionic somatomammotropin hormone 2 (238 aa).

The N-terminal stretch at 1–36 (MAPAPSFRGHQWTYNPVRGSCLLLLLVVSNLLLCQG) is a signal peptide. His-66 lines the Zn(2+) pocket. 4 N-linked (GlcNAc...) asparagine glycosylation sites follow: Asn-70, Asn-92, Asn-146, and Asn-160. Cys-97 and Cys-215 are joined by a disulfide. Asp-224 lines the Zn(2+) pocket. Residues Cys-232 and Cys-238 are joined by a disulfide bond.

The protein belongs to the somatotropin/prolactin family.

It is found in the secreted. This chain is Chorionic somatomammotropin hormone 2 (CSH2), found in Bos taurus (Bovine).